The primary structure comprises 333 residues: Phosphate acyltransferase (333 aa).

Belongs to the PlsX family. Homodimer. Probably interacts with PlsY.

The protein resides in the cytoplasm. It catalyses the reaction a fatty acyl-[ACP] + phosphate = an acyl phosphate + holo-[ACP]. It participates in lipid metabolism; phospholipid metabolism. Catalyzes the reversible formation of acyl-phosphate (acyl-PO(4)) from acyl-[acyl-carrier-protein] (acyl-ACP). This enzyme utilizes acyl-ACP as fatty acyl donor, but not acyl-CoA. The polypeptide is Phosphate acyltransferase (Lactobacillus johnsonii (strain CNCM I-12250 / La1 / NCC 533)).